Consider the following 999-residue polypeptide: MTRPASVLAGPKSRPPIHSQGDKTIEYAEKLLSVFILVPFAGSLIAIFFPSDQRGAISWFAGAIALVCFLVTAGLYPYVASGGVLHYRIDWVPELGLNFTLRMDGFAWLFSALITAIGVLVALYARYYMAEEDPVPRFFALFLAFMGSMLGVVLSGNLILLAVFWELTSIVSFLLIGYWHHNAHARDGARMALTITGTGGLAMFVGLIIIGKIVGSYELDAVLASGDAIRNHPLYGTVLVLVLLGALTKSAQFPFHFWLPHAMAAPTPVSAYLHSATMVKAGVFLLVRFWPVMAGTEAWFWIVGLAGLTTLLLGAYFAIFQQDLKGLLAYSTISHLGLITVLLSLGSPLAAVAAVFHIVNHATFKASLFMAAGIIDHESGTRDIRRLGGLFHFMPITATLAMVASAAMAGVPLLNGFLSKEMFFAEAIETHLVNPLDTVTPYVATIAGMFAVTYSLRFIHGVFFGRPPADLPRKPHEPPRWMRAPLDFLVLACLVVGIIPAQTIGPFLHTAVLSVLREGTPDYSLSVWHGWNIPLIMSFVALSGGIGLYFLMRSYLATAVEGPPVFRLLQGQRIFERVLVTLSWKWARWLEQRLGTRRLQPQMRLLVFLALAAGASPLLLGNFELPPLVIRGIDPAFALLWAIGIACAIGSAYQAKFHRLASLVLLGGAGLVTCITFVWLSAPDLAVTQLLVEIVTTVLILLGLRWLPKRIEEPVAAEDISIRVRLRRLRDLLLAIGAGGGMMLIAYTVMTRPLPETIASYFLERAYREGGGTNVVNVILVDFRGFDTLGEIAVLCIVALTVFALLLRFRPQSDSLEAPEQQKVQNAFDDDHPDRAAGDSVAEYLFIPAVIMRWMFPVTGMLAAFLFLRGHDLPGGGFAAGIAMSIGFILQYMSGGTRWVEERLRIHPLRWMSIGLLVATATGVGSWFFGYPFLTSHAQYASLPVVGKFPLASAILFDLGVFSLVLGATVLILIALAHQSVRAPRAHAKAARSDKEAVR.

Residues 1 to 20 are disordered; sequence MTRPASVLAGPKSRPPIHSQ. The next 24 membrane-spanning stretches (helical) occupy residues 31–48, 63–85, 106–128, 138–160, 162–181, 191–213, 233–255, 270–292, 299–321, 336–358, 389–411, 442–464, 488–510, 530–552, 604–621, 636–653, 660–682, 686–708, 729–751, 788–807, 846–868, 878–900, 913–935, and 955–977; these read LLSV…IAIF, AIAL…GGVL, FAWL…ARYY, FFAL…NLIL, AVFW…YWHH, MALT…IGKI, PLYG…QFPF, SAYL…FWPV, WFWI…AIFQ, LGLI…VFHI, GLFH…MAGV, YVAT…GVFF, FLVL…FLHT, GWNI…YFLM, RLLV…LLLG, AFAL…GSAY, LASL…WLSA, AVTQ…RWLP, LRDL…TVMT, TLGE…ALLL, FIPA…FLFL, FAAG…TRWV, SIGL…PFLT, and ILFD…IALA.

This sequence in the N-terminal section; belongs to the CPA3 antiporters (TC 2.A.63) subunit A family. It in the C-terminal section; belongs to the CPA3 antiporters (TC 2.A.63) subunit B family. As to quaternary structure, may form a heterooligomeric complex that consists of six subunits: PhaAB, PhaC, PhaD, PhaE, PhaF and PhaG.

The protein localises to the cell membrane. In terms of biological role, part of a K(+) efflux system which is required for the adaptation of R.meliloti to alkaline pH as well as for the infection process during symbiotic nodule development. The protein is Probable K(+)/H(+) antiporter subunit A/B (phaAB) of Rhizobium meliloti (strain 1021) (Ensifer meliloti).